The sequence spans 295 residues: ATP synthase gamma chain (295 aa).

Belongs to the ATPase gamma chain family. In terms of assembly, F-type ATPases have 2 components, CF(1) - the catalytic core - and CF(0) - the membrane proton channel. CF(1) has five subunits: alpha(3), beta(3), gamma(1), delta(1), epsilon(1). CF(0) has three main subunits: a, b and c.

Its subcellular location is the cell inner membrane. Produces ATP from ADP in the presence of a proton gradient across the membrane. The gamma chain is believed to be important in regulating ATPase activity and the flow of protons through the CF(0) complex. The polypeptide is ATP synthase gamma chain (Campylobacter fetus subsp. fetus (strain 82-40)).